A 280-amino-acid polypeptide reads, in one-letter code: Diaminopimelate epimerase (280 aa).

Residues Asn13 and Asn64 each contribute to the substrate site. Cys73 (proton donor) is an active-site residue. Residues 74 to 75 (GN), Asn164, Asn197, and 215 to 216 (ER) each bind substrate. Cys224 (proton acceptor) is an active-site residue. 225–226 (GT) is a substrate binding site.

Belongs to the diaminopimelate epimerase family. As to quaternary structure, homodimer.

Its subcellular location is the cytoplasm. The enzyme catalyses (2S,6S)-2,6-diaminopimelate = meso-2,6-diaminopimelate. It functions in the pathway amino-acid biosynthesis; L-lysine biosynthesis via DAP pathway; DL-2,6-diaminopimelate from LL-2,6-diaminopimelate: step 1/1. In terms of biological role, catalyzes the stereoinversion of LL-2,6-diaminopimelate (L,L-DAP) to meso-diaminopimelate (meso-DAP), a precursor of L-lysine and an essential component of the bacterial peptidoglycan. In Leptospira biflexa serovar Patoc (strain Patoc 1 / Ames), this protein is Diaminopimelate epimerase.